The primary structure comprises 197 residues: UPF0301 protein BAV3012 (197 aa).

Belongs to the UPF0301 (AlgH) family.

This chain is UPF0301 protein BAV3012, found in Bordetella avium (strain 197N).